The sequence spans 468 residues: Tyrosine-protein phosphatase YopH (468 aa).

The segment at alanine 127–arginine 194 is disordered. A compositionally biased stretch (low complexity) spans histidine 130–alanine 141. In terms of domain architecture, Tyrosine-protein phosphatase spans serine 152 to glutamine 461. The active-site Phosphocysteine intermediate is cysteine 403.

This sequence belongs to the protein-tyrosine phosphatase family. Non-receptor class subfamily.

The protein localises to the secreted. The catalysed reaction is O-phospho-L-tyrosyl-[protein] + H2O = L-tyrosyl-[protein] + phosphate. Essential virulence determinant. This protein is a protein tyrosine phosphatase. The essential function of YopH in Yersinia pathogenesis is host-protein dephosphorylation. It contributes to the ability of the bacteria to resist phagocytosis by peritoneal macrophages. This is Tyrosine-protein phosphatase YopH (yopH) from Yersinia pseudotuberculosis serotype I (strain IP32953).